The chain runs to 581 residues: Pyridine nucleotide-disulfide oxidoreductase domain-containing protein 2 (581 aa).

Position 38 to 71 (38 to 71) interacts with FAD; that stretch reads VVIGAGHNGLVAAAYLQRLGVNTAVFERRHVIGG.

It belongs to the carotenoid/retinoid oxidoreductase family. In terms of assembly, interacts with COX5B; this interaction may contribute to localize PYROXD2 to the inner face of the inner mitochondrial membrane.

It is found in the mitochondrion matrix. Its function is as follows. Probable oxidoreductase that may play a role as regulator of mitochondrial function. The protein is Pyridine nucleotide-disulfide oxidoreductase domain-containing protein 2 of Mus musculus (Mouse).